Here is a 394-residue protein sequence, read N- to C-terminus: 8-amino-7-oxononanoate synthase (394 aa).

R22 lines the substrate pocket. 113 to 114 (GY) serves as a coordination point for pyridoxal 5'-phosphate. Substrate is bound at residue H138. S184, H212, and T240 together coordinate pyridoxal 5'-phosphate. Residue K243 is modified to N6-(pyridoxal phosphate)lysine. T359 is a substrate binding site.

Belongs to the class-II pyridoxal-phosphate-dependent aminotransferase family. BioF subfamily. As to quaternary structure, homodimer. It depends on pyridoxal 5'-phosphate as a cofactor.

It catalyses the reaction 6-carboxyhexanoyl-[ACP] + L-alanine + H(+) = (8S)-8-amino-7-oxononanoate + holo-[ACP] + CO2. Its pathway is cofactor biosynthesis; biotin biosynthesis. Functionally, catalyzes the decarboxylative condensation of pimeloyl-[acyl-carrier protein] and L-alanine to produce 8-amino-7-oxononanoate (AON), [acyl-carrier protein], and carbon dioxide. The chain is 8-amino-7-oxononanoate synthase from Janthinobacterium sp. (strain Marseille) (Minibacterium massiliensis).